A 226-amino-acid chain; its full sequence is MARTPNIALVDYGVGNLHSARKGLEAMGARVTLSGQPLTLSAADGVVLPGVGSFDTAITRLNDRGLGDAIIQLVRAGQPMLGICLGLQVLFDSSEEGRLPGLGLLPGRVRRFRSEPGLTIPHVGWNQLHFDNVDCPLWRDLAAGGWVYFVHSYYVDPARAEDRAASAVHGSQHFTAAVCRDNLMAVQFHPEKSADTGLRILKNFVERAASRSAAEVAARCATRPPA.

The region spanning 6–214 (NIALVDYGVG…VERAASRSAA (209 aa)) is the Glutamine amidotransferase type-1 domain. C84 functions as the Nucleophile in the catalytic mechanism. Active-site residues include H189 and E191.

As to quaternary structure, heterodimer of HisH and HisF.

The protein localises to the cytoplasm. It catalyses the reaction 5-[(5-phospho-1-deoxy-D-ribulos-1-ylimino)methylamino]-1-(5-phospho-beta-D-ribosyl)imidazole-4-carboxamide + L-glutamine = D-erythro-1-(imidazol-4-yl)glycerol 3-phosphate + 5-amino-1-(5-phospho-beta-D-ribosyl)imidazole-4-carboxamide + L-glutamate + H(+). It carries out the reaction L-glutamine + H2O = L-glutamate + NH4(+). The protein operates within amino-acid biosynthesis; L-histidine biosynthesis; L-histidine from 5-phospho-alpha-D-ribose 1-diphosphate: step 5/9. IGPS catalyzes the conversion of PRFAR and glutamine to IGP, AICAR and glutamate. The HisH subunit catalyzes the hydrolysis of glutamine to glutamate and ammonia as part of the synthesis of IGP and AICAR. The resulting ammonia molecule is channeled to the active site of HisF. This Gloeobacter violaceus (strain ATCC 29082 / PCC 7421) protein is Imidazole glycerol phosphate synthase subunit HisH.